The primary structure comprises 214 residues: MKIILLGAPGAGKGTQAQFITNKFGIPQISTGDMLRAAIKAGSELGQKAKILMDMGQLVPDDLIISLVKERVAQEDCEKGFLLDGFPRTIPQADALKSVGISIDYVLEFDVPDEVIVERMSGRRVHPASGRTYHIVYNPPKVEDKDDITGEDLILRADDKPETVLDRLKIYHNTTKLLVDYYQAEAAQGNTKYFRLDGTQKVEEVSQELDKILS.

10–15 serves as a coordination point for ATP; the sequence is GAGKGT. Residues 30–59 are NMP; the sequence is STGDMLRAAIKAGSELGQKAKILMDMGQLV. Residues Thr-31, Arg-36, 57 to 59, 85 to 88, and Gln-92 each bind AMP; these read QLV and GFPR. The LID stretch occupies residues 122–159; it reads GRRVHPASGRTYHIVYNPPKVEDKDDITGEDLILRADD. ATP-binding positions include Arg-123 and 132-133; that span reads TY. 2 residues coordinate AMP: Arg-156 and Arg-167. Gln-200 contributes to the ATP binding site.

The protein belongs to the adenylate kinase family. Monomer.

It is found in the cytoplasm. It catalyses the reaction AMP + ATP = 2 ADP. It functions in the pathway purine metabolism; AMP biosynthesis via salvage pathway; AMP from ADP: step 1/1. In terms of biological role, catalyzes the reversible transfer of the terminal phosphate group between ATP and AMP. Plays an important role in cellular energy homeostasis and in adenine nucleotide metabolism. This Histophilus somni (strain 129Pt) (Haemophilus somnus) protein is Adenylate kinase.